We begin with the raw amino-acid sequence, 25 residues long: Cysteine protease inhibitor 2 (25 aa).

The protein belongs to the protease inhibitor I3 (leguminous Kunitz-type inhibitor) family. In terms of tissue distribution, cortex of tuber.

In terms of biological role, inhibitor of subtilisin. Inhibits moderately trypsin and chymotrypsin (serine proteases). May protect the plant by inhibiting proteases of invading organisms. This Solanum tuberosum (Potato) protein is Cysteine protease inhibitor 2.